The sequence spans 559 residues: Acetolactate synthase, catabolic (559 aa).

Residues Arg159, Phe263–Ser284, and Asp304–Asp323 each bind FAD. A Mg(2+)-binding site is contributed by Asp447.

This sequence belongs to the TPP enzyme family. In terms of assembly, homodimer.

It carries out the reaction 2 pyruvate + H(+) = (2S)-2-acetolactate + CO2. It participates in polyol metabolism; (R,R)-butane-2,3-diol biosynthesis; (R,R)-butane-2,3-diol from pyruvate: step 1/3. The polypeptide is Acetolactate synthase, catabolic (budB) (Raoultella terrigena (Klebsiella terrigena)).